The sequence spans 270 residues: Putative phosphoenolpyruvate synthase regulatory protein (270 aa).

150-157 (GVSRCGKT) is a binding site for ADP.

The protein belongs to the pyruvate, phosphate/water dikinase regulatory protein family. PSRP subfamily.

The enzyme catalyses [pyruvate, water dikinase] + ADP = [pyruvate, water dikinase]-phosphate + AMP + H(+). It catalyses the reaction [pyruvate, water dikinase]-phosphate + phosphate + H(+) = [pyruvate, water dikinase] + diphosphate. In terms of biological role, bifunctional serine/threonine kinase and phosphorylase involved in the regulation of the phosphoenolpyruvate synthase (PEPS) by catalyzing its phosphorylation/dephosphorylation. The chain is Putative phosphoenolpyruvate synthase regulatory protein from Shewanella oneidensis (strain ATCC 700550 / JCM 31522 / CIP 106686 / LMG 19005 / NCIMB 14063 / MR-1).